Reading from the N-terminus, the 397-residue chain is t-SNARE affecting a late Golgi compartment protein 2 (397 aa).

At 1–317 the chain is on the cytoplasmic side; the sequence is MFRDRTNLFL…HYQKRTQKCK (317 aa). Residues 74–96 adopt a coiled-coil conformation; sequence DIAQDVDDYLLEVRRLSEQLAKV. A Phosphoserine modification is found at serine 109. In terms of domain architecture, t-SNARE coiled-coil homology spans 244 to 306; sequence EAYLRERDEE…KSADKELNKA (63 aa). Residues 318–338 form a helical; Anchor for type IV membrane protein membrane-spanning segment; the sequence is VILLLTLCVIALFFFVMLKPH. Residues 339 to 397 are Vesicular-facing; it reads GGGSGGRNNGSNKYNNDDNKTVNNSHDDGSNTHINDEESNLPSIVEVTESENDALDDLL. The segment at 341-397 is disordered; it reads GSGGRNNGSNKYNNDDNKTVNNSHDDGSNTHINDEESNLPSIVEVTESENDALDDLL. A compositionally biased stretch (basic and acidic residues) spans 353 to 374; the sequence is NNDDNKTVNNSHDDGSNTHIND. Over residues 386-397 the composition is skewed to acidic residues; that stretch reads TESENDALDDLL.

It belongs to the syntaxin family. As to quaternary structure, interacts with VPS45.

It localises to the golgi apparatus. The protein resides in the trans-Golgi network membrane. Its subcellular location is the endosome membrane. Its function is as follows. t-SNARE that functions in transport from the endosome to the late Golgi and on the endocytic pathway. The polypeptide is t-SNARE affecting a late Golgi compartment protein 2 (TLG2) (Saccharomyces cerevisiae (strain ATCC 204508 / S288c) (Baker's yeast)).